A 3461-amino-acid chain; its full sequence is Reelin (3461 aa).

A signal peptide spans 1–26 (MERGCWAPRALVLAVLLLLATLRARA). Residues 27–191 (ATGYYPRFSP…GAPTEATAYS (165 aa)) enclose the Reelin domain. C41 and C127 are oxidised to a cystine. N141 carries N-linked (GlcNAc...) asparagine glycosylation. A disulfide bond links C155 and C179. 3 N-linked (GlcNAc...) asparagine glycosylation sites follow: N258, N290, and N306. An intrachain disulfide couples C540 to C581. One copy of the BNR 1 repeat lies at 593–604 (EFSTNHGRSWSL). A disulfide bridge links C609 with C614. N-linked (GlcNAc...) asparagine glycosylation is present at N629. Residues 671–702 (IGPSCLKFCSGRGQCTRHGCKCDPGFSGPACE) form the EGF-like 1 domain. 2 disulfide bridges follow: C675–C685 and C692–C701. A BNR 2 repeat occupies 799-810 (HYSYDNGITWKL). C895 and C937 form a disulfide bridge. A BNR 3 repeat occupies 952–963 (EYSANHGLTWHL). 3 cysteine pairs are disulfide-bonded: C968–C975, C1034–C1044, and C1051–C1060. One can recognise an EGF-like 2 domain in the interval 1030–1061 (IGQQCPNMCSGHGSCDHGVCRCDQGYQGTECH). The stretch at 1157 to 1168 (QYSNNGGIQWHL) is one BNR 4 repeat. N-linked (GlcNAc...) asparagine glycosylation occurs at N1267. Residues 1323 to 1334 (QYSHDAGMSWFL) form a BNR 5 repeat. 4 cysteine pairs are disulfide-bonded: C1339/C1348, C1413/C1423, C1417/C1428, and C1430/C1441. Residues 1409-1442 (ISEPCPSYCSGHGDCISGVCFCDLGYTAAQGTCV) enclose the EGF-like 3 domain. The N-linked (GlcNAc...) asparagine glycan is linked to N1447. Cysteines 1475 and 1522 form a disulfide. A BNR 6 repeat occupies 1535-1546 (QYSNDNGILWHL). N1600 carries N-linked (GlcNAc...) asparagine glycosylation. Cysteines 1633 and 1673 form a disulfide. Residues 1686–1697 (QYSLNNGKDWQL) form a BNR 7 repeat. C1702 and C1709 form a disulfide bridge. An N-linked (GlcNAc...) asparagine glycan is attached at N1750. One can recognise an EGF-like 4 domain in the interval 1765-1796 (LASGCPWMCSGRGICDSGRCVCDRGFGGPFCV). The BNR 8 repeat unit spans residues 1884 to 1895 (QFSVSGGVTWHL). A glycan (N-linked (GlcNAc...) asparagine) is linked at N1921. A disulfide bridge connects residues C1983 and C2030. Residues 2043–2054 (EFSRDFGATWHL) form a BNR 9 repeat. C2059 and C2070 are disulfide-bonded. The Zn(2+) site is built by H2061 and H2074. The region spanning 2129-2161 (IGPQCEEMCYGHGSCINGTKCICDPGYSGPTCK) is the EGF-like 5 domain. 3 disulfides stabilise this stretch: C2133–C2143, C2137–C2149, and C2151–C2160. N2145 is a glycosylation site (N-linked (GlcNAc...) asparagine). E2179 contributes to the Zn(2+) binding site. C2195 and C2235 form a disulfide bridge. Residues 2250-2261 (QYSLNGGLSWSL) form a BNR 10 repeat. E2264 lines the Zn(2+) pocket. N2269 and N2317 each carry an N-linked (GlcNAc...) asparagine glycan. Disulfide bonds link C2348–C2387, C2393–C2559, C2482–C2492, C2486–C2497, C2499–C2508, and C2544–C2584. Zn(2+) contacts are provided by E2397, E2399, and H2460. The stretch at 2399–2410 (EYSVDLGLSWHP) is one BNR 11 repeat. Residues 2478–2509 (IGDGCLDMCSGHGRCVQGSCVCDEQWGGLYCD) form the EGF-like 6 domain. Residue N2569 is glycosylated (N-linked (GlcNAc...) asparagine). 2 BNR repeats span residues 2598–2609 (EYSVNGGITWNL) and 2778–2789 (QFSTDFGVSWSY). C2794 and C2801 are joined by a disulfide. Residues 2853–2884 (LGPGCLDNCGGHGDCLKEQCICDPGYSGPNCY) enclose the EGF-like 7 domain. C2919 and C2966 form a disulfide bridge. N-linked (GlcNAc...) asparagine glycosylation is present at N2962. The stretch at 2979–2990 (DFSTDGGITWTL) is one BNR 14 repeat. N-linked (GlcNAc...) asparagine glycans are attached at residues N3016 and N3073. The stretch at 3143–3155 (EYTKDARSDSWQL) is one BNR 15 repeat. Cysteines 3160 and 3170 form a disulfide. N-linked (GlcNAc...) asparagine glycosylation occurs at N3185. Residues 3228–3260 (IGEACPKLCSGHGYCTTGAVCICDESFQGDDCS) enclose the EGF-like 8 domain. 4 disulfide bridges follow: C3232–C3242, C3236–C3248, C3250–C3259, and C3296–C3346. A BNR 16 repeat occupies 3363–3374 (QYSVNNGITWHV). N-linked (GlcNAc...) asparagine glycosylation is found at N3412 and N3439.

It belongs to the reelin family. As to quaternary structure, oligomer of disulfide-linked homodimers. Post-translationally, N-glycosylated and to a lesser extent also O-glycosylated. In terms of tissue distribution, the major isoform 1 is neuron-specific. It is abundantly produced during brain ontogenesis by the Cajal-Retzius cells and other pioneer neurons located in the telencephalic marginal zone and by granule cells of the external granular layer of the cerebellum. Expression is located in deeper layers in the developing hippocampus and olfactory bulb, low levels of expression are also detected in the immature striatum. At early developmental stages, expressed also in hypothalamic differentiation fields, tectum and spinal cord. A moderate to low level of expression occurs in the septal area, striatal fields, habenular nuclei, some thalamic nuclei, particularly the lateral geniculate, the retina and some nuclei of the reticular formation in the central field of the medulla. Very low levels found in liver and kidney. No expression in radial glial cells, cortical plate, Purkinje cells and inferior olivary neurons. The minor isoform 2 is only expressed in non neuronal cells. The minor isoform 3 is found in the same cells as isoform 1, but is almost undetectable in retina and brain stem.

The protein localises to the secreted. The protein resides in the extracellular space. Its subcellular location is the extracellular matrix. Extracellular matrix serine protease secreted by pioneer neurons that plays a role in layering of neurons in the cerebral cortex and cerebellum by coordinating cell positioning during neurodevelopment. Regulates microtubule function in neurons and neuronal migration. Binding to the extracellular domains of lipoprotein receptors VLDLR and LRP8/APOER2 induces tyrosine phosphorylation of DAB1 and modulation of TAU phosphorylation. Affects migration of sympathetic preganglionic neurons in the spinal cord, where it seems to act as a barrier to neuronal migration. Enzymatic activity is important for the modulation of cell adhesion. This chain is Reelin (Reln), found in Mus musculus (Mouse).